Here is a 627-residue protein sequence, read N- to C-terminus: (-)-beta-pinene synthase 1, chloroplastic (627 aa).

A chloroplast-targeting transit peptide spans 1–50; the sequence is MDLISVLPSTSKSCVCLHKPLSSSTHKLKPFCRTIRILGMPRPRKSVLMA. Mg(2+)-binding residues include Asp-378, Asp-382, and Asp-530. The DDXXD motif signature appears at 378–382; it reads DDMYD.

It belongs to the terpene synthase family. Tpsd subfamily. Requires Mg(2+) as cofactor. Mn(2+) is required as a cofactor.

Its subcellular location is the plastid. The protein localises to the chloroplast. The catalysed reaction is (2E)-geranyl diphosphate = (1S,5S)-beta-pinene + diphosphate. The enzyme catalyses (2E)-geranyl diphosphate = (1S,5S)-alpha-pinene + diphosphate. Its pathway is terpene metabolism; oleoresin biosynthesis. It functions in the pathway secondary metabolite biosynthesis; terpenoid biosynthesis. Monoterpene synthase (TPS) involved in the biosynthesis of monoterpene natural products included in conifer oleoresin secretions and volatile emissions; these compounds contribute to biotic and abiotic stress defense against herbivores and pathogens. Catalyzes the conversion of (2E)-geranyl diphosphate (GPP) to (-)-beta-pinene and, to a lower extent, to (-)-alpha-pinene. The polypeptide is (-)-beta-pinene synthase 1, chloroplastic (Pinus contorta (Shore pine)).